Reading from the N-terminus, the 718-residue chain is K(+)-insensitive pyrophosphate-energized proton pump (718 aa).

The next 6 membrane-spanning stretches (helical) occupy residues 6–26 (AVLV…IWAI), 61–81 (IAIV…LNAA), 83–103 (GFLI…HVSV), 112–132 (AASL…AITG), 133–153 (LLVA…LTVW), and 168–188 (VSLG…GGIF). Lys190 provides a ligand contact to substrate. Residues Asp193, Asp197, Asn220, and Asp223 each coordinate Mg(2+). Transmembrane regions (helical) follow at residues 235–255 (LFET…IFFH), 265–285 (LYPL…TFFV), 300–320 (GLIA…TLTV), 335–355 (GTNL…IVVI), 385–405 (GLAV…GGII), and 413–433 (LFGT…IVAL). Asp441 is a binding site for Mg(2+). Transmembrane regions (helical) follow at residues 472–492 (AVTK…LFAA), 524–544 (YVVA…GMAM), 593–613 (IIPS…VLLI), and 620–640 (AFAA…FVAI). Ca(2+) is bound by residues Asp650, Asp682, and Asp686. A substrate-binding site is contributed by Lys689. A helical transmembrane segment spans residues 695-715 (AVNPAIKITNIVALLLLAVLA).

This sequence belongs to the H(+)-translocating pyrophosphatase (TC 3.A.10) family. K(+)-insensitive subfamily. Homodimer. It depends on Mg(2+) as a cofactor.

Its subcellular location is the cell inner membrane. It carries out the reaction diphosphate + H2O + H(+)(in) = 2 phosphate + 2 H(+)(out). In terms of biological role, proton pump that utilizes the energy of pyrophosphate hydrolysis as the driving force for proton movement across the membrane. Generates a proton motive force. This chain is K(+)-insensitive pyrophosphate-energized proton pump, found in Brucella melitensis biotype 1 (strain ATCC 23456 / CCUG 17765 / NCTC 10094 / 16M).